The primary structure comprises 102 residues: Protamine-2 (102 aa).

Serine 8, serine 10, and serine 37 each carry phosphoserine. The segment at valine 16 to histidine 102 is disordered. Residues glycine 49–histidine 102 show a composition bias toward basic residues.

This sequence belongs to the protamine P2 family. In terms of assembly, interacts with TDRP. In terms of processing, proteolytic processing into mature chains is required for histone eviction during spermatogenesis. Transition proteins (TNP1 and TNP2) are required for processing. As to expression, testis.

The protein localises to the nucleus. Its subcellular location is the chromosome. Protamines substitute for histones in the chromatin of sperm during the haploid phase of spermatogenesis. They compact sperm DNA into a highly condensed, stable and inactive complex. The polypeptide is Protamine-2 (PRM2) (Hylobates lar (Lar gibbon)).